A 534-amino-acid polypeptide reads, in one-letter code: UDP-glucuronosyltransferase 2A3 (534 aa).

The first 18 residues, 1-18 (MVSEKCVAAFFLLQLCWA), serve as a signal peptide directing secretion. The Extracellular segment spans residues 19–493 (GCGFCSKVLV…SWFQYHSLDV (475 aa)). N102 carries N-linked (GlcNAc...) asparagine glycosylation. K135 bears the N6-succinyllysine mark. N204 is a glycosylation site (N-linked (GlcNAc...) asparagine). Residues 494-514 (IGFLLLCVVTLTFIITKFCLF) traverse the membrane as a helical segment. Topologically, residues 515 to 534 (VCQKLYMKESKKMGNRKKKN) are cytoplasmic.

The protein belongs to the UDP-glycosyltransferase family. In terms of tissue distribution, highly expressed in liver, with lower levels in duodenum and jejunum.

Its subcellular location is the membrane. The enzyme catalyses glucuronate acceptor + UDP-alpha-D-glucuronate = acceptor beta-D-glucuronoside + UDP + H(+). Its function is as follows. UDP-glucuronosyltransferases catalyze phase II biotransformation reactions in which lipophilic substrates are conjugated with glucuronic acid to increase water solubility and enhance excretion. They are of major importance in the conjugation and subsequent elimination of potentially toxic xenobiotics and endogenous compounds. The sequence is that of UDP-glucuronosyltransferase 2A3 (Ugt2a3) from Mus musculus (Mouse).